The primary structure comprises 476 residues: Chromosomal replication initiator protein DnaA (476 aa).

Residues 1 to 87 (MSESSHVGLW…LMYNVLVDKS (87 aa)) are domain I, interacts with DnaA modulators. Residues 87-130 (SSGATVNQESTTRSTAIPQSGLPRVDERKAPGLLRAPAVQDLDP) are domain II. The tract at residues 131 to 348 (HLNPNYNFET…GIVISIMAHS (218 aa)) is domain III, AAA+ region. Residues glycine 176, glycine 178, lysine 179, and threonine 180 each coordinate ATP. The interval 349–476 (TIYNKEIDLD…KKRNVSNGER (128 aa)) is domain IV, binds dsDNA.

It belongs to the DnaA family. Oligomerizes as a right-handed, spiral filament on DNA at oriC.

Its subcellular location is the cytoplasm. Plays an essential role in the initiation and regulation of chromosomal replication. ATP-DnaA binds to the origin of replication (oriC) to initiate formation of the DNA replication initiation complex once per cell cycle. Binds the DnaA box (a 9 base pair repeat at the origin) and separates the double-stranded (ds)DNA. Forms a right-handed helical filament on oriC DNA; dsDNA binds to the exterior of the filament while single-stranded (ss)DNA is stabiized in the filament's interior. The ATP-DnaA-oriC complex binds and stabilizes one strand of the AT-rich DNA unwinding element (DUE), permitting loading of DNA polymerase. After initiation quickly degrades to an ADP-DnaA complex that is not apt for DNA replication. Binds acidic phospholipids. The protein is Chromosomal replication initiator protein DnaA of Bacteroides fragilis (strain YCH46).